Reading from the N-terminus, the 335-residue chain is Glycerol-3-phosphate dehydrogenase [NAD(P)+] (335 aa).

Lys109 provides a ligand contact to NADPH. Lys109, Gly141, and Ser143 together coordinate sn-glycerol 3-phosphate. Ala145 contributes to the NADPH binding site. Positions 196, 249, 259, 260, and 261 each coordinate sn-glycerol 3-phosphate. Lys196 serves as the catalytic Proton acceptor. An NADPH-binding site is contributed by Arg260. Glu283 is an NADPH binding site.

Belongs to the NAD-dependent glycerol-3-phosphate dehydrogenase family.

The protein resides in the cytoplasm. The catalysed reaction is sn-glycerol 3-phosphate + NAD(+) = dihydroxyacetone phosphate + NADH + H(+). It carries out the reaction sn-glycerol 3-phosphate + NADP(+) = dihydroxyacetone phosphate + NADPH + H(+). It participates in membrane lipid metabolism; glycerophospholipid metabolism. Catalyzes the reduction of the glycolytic intermediate dihydroxyacetone phosphate (DHAP) to sn-glycerol 3-phosphate (G3P), the key precursor for phospholipid synthesis. This chain is Glycerol-3-phosphate dehydrogenase [NAD(P)+], found in Mycoplasma mobile (strain ATCC 43663 / 163K / NCTC 11711) (Mesomycoplasma mobile).